The chain runs to 379 residues: Chaperone protein DnaJ (379 aa).

In terms of domain architecture, J spans 7–72 (CYYETLEVER…DKRAAYDRYG (66 aa)). The CR-type zinc-finger motif lies at 135–213 (GKTAQIEIPV…CTGSGRVTKE (79 aa)). C148, C151, C165, C168, C187, C190, C201, and C204 together coordinate Zn(2+). CXXCXGXG motif repeat units follow at residues 148–155 (CESCSGTG), 165–172 (CSTCGGAG), 187–194 (CPSCQGRG), and 201–208 (CPSCTGSG).

The protein belongs to the DnaJ family. Homodimer. Zn(2+) serves as cofactor.

The protein resides in the cytoplasm. Its function is as follows. Participates actively in the response to hyperosmotic and heat shock by preventing the aggregation of stress-denatured proteins and by disaggregating proteins, also in an autonomous, DnaK-independent fashion. Unfolded proteins bind initially to DnaJ; upon interaction with the DnaJ-bound protein, DnaK hydrolyzes its bound ATP, resulting in the formation of a stable complex. GrpE releases ADP from DnaK; ATP binding to DnaK triggers the release of the substrate protein, thus completing the reaction cycle. Several rounds of ATP-dependent interactions between DnaJ, DnaK and GrpE are required for fully efficient folding. Also involved, together with DnaK and GrpE, in the DNA replication of plasmids through activation of initiation proteins. This is Chaperone protein DnaJ from Rhodopseudomonas palustris (strain HaA2).